Consider the following 388-residue polypeptide: Succinate--CoA ligase [ADP-forming] subunit beta (388 aa).

Residues K9–E244 form the ATP-grasp domain. ATP is bound by residues K46, G53 to G55, E99, A102, and E107. 2 residues coordinate Mg(2+): N199 and D213. Substrate-binding positions include N264 and G321–M323.

It belongs to the succinate/malate CoA ligase beta subunit family. As to quaternary structure, heterotetramer of two alpha and two beta subunits. The cofactor is Mg(2+).

The enzyme catalyses succinate + ATP + CoA = succinyl-CoA + ADP + phosphate. It carries out the reaction GTP + succinate + CoA = succinyl-CoA + GDP + phosphate. It functions in the pathway carbohydrate metabolism; tricarboxylic acid cycle; succinate from succinyl-CoA (ligase route): step 1/1. Succinyl-CoA synthetase functions in the citric acid cycle (TCA), coupling the hydrolysis of succinyl-CoA to the synthesis of either ATP or GTP and thus represents the only step of substrate-level phosphorylation in the TCA. The beta subunit provides nucleotide specificity of the enzyme and binds the substrate succinate, while the binding sites for coenzyme A and phosphate are found in the alpha subunit. The chain is Succinate--CoA ligase [ADP-forming] subunit beta from Herminiimonas arsenicoxydans.